Consider the following 83-residue polypeptide: Antitoxin ChpS (83 aa).

In terms of domain architecture, SpoVT-AbrB spans 3-48 (ITIKRWGNSAGMVIPNIVMKELNLQPGQSVEAQVSNNQLILTPISR).

Belongs to the PemI family. As to quaternary structure, interacts with ChpB, inhibiting its endoribonuclease activity.

Functionally, antitoxin component of a type II toxin-antitoxin (TA) system. May be involved in the regulation of cell growth. It acts as a suppressor of the endoribonuclease (inhibitory function) of ChpB protein. Both ChpS and ChpB probably bind to the promoter region of the chpS-chpB operon to autoregulate their synthesis. The chain is Antitoxin ChpS (chpS) from Escherichia coli (strain K12).